A 478-amino-acid polypeptide reads, in one-letter code: Divinyl ether synthase CYP74D1 (478 aa).

Cys-431 provides a ligand contact to heme.

It belongs to the cytochrome P450 family. 9-divinyl ether synthase subfamily. Expressed in roots. Detected in stems, but not in flower buds, petioles, cotyledons or leaves.

The enzyme catalyses (9S)-hydroperoxy-(10E,12Z)-octadecadienoate = colneleate + H2O. It carries out the reaction (9S)-hydroperoxy-(10E,12Z,15Z)-octadecatrienoate = colnelenate + H2O. Its function is as follows. Involved in the biosynthesis of the anti-fungal toxins colneleate and colnelenate. Can use (9S)-hydroperoxy-(10E,12Z)-octadecadienoate (9-HPOD) and (9S)-hydroperoxy-(10E,12Z,15Z)-octadecatrienoate (9-HPOT) as substrates, but has a very low activity with the corresponding 13-hydroperoxides (13-HPOD and 13-POT). The polypeptide is Divinyl ether synthase CYP74D1 (Solanum lycopersicum (Tomato)).